Reading from the N-terminus, the 824-residue chain is LPS-assembly protein LptD (824 aa).

Disordered stretches follow at residues 1–26 (MTEQ…RRVR) and 67–117 (TQTP…PAYV). An N-terminal signal peptide occupies residues 1–48 (MTEQRRSPHHPATRPPAPPGTSRRVRLPASALRPLVLAMAGLTVSAHA). Over residues 98-115 (NTLNLSPSSTPSNPNAPA) the composition is skewed to low complexity.

The protein belongs to the LptD family. As to quaternary structure, component of the lipopolysaccharide transport and assembly complex. Interacts with LptE and LptA.

Its subcellular location is the cell outer membrane. Its function is as follows. Together with LptE, is involved in the assembly of lipopolysaccharide (LPS) at the surface of the outer membrane. The chain is LPS-assembly protein LptD from Cupriavidus metallidurans (strain ATCC 43123 / DSM 2839 / NBRC 102507 / CH34) (Ralstonia metallidurans).